The following is a 1358-amino-acid chain: Insulin-like growth factor 1 receptor (1358 aa).

An N-terminal signal peptide occupies residues 1 to 25 (MKAELVPVCTAWILGLLLCLGPAAA). Cys-28 and Cys-47 are joined by a disulfide. 3 N-linked (GlcNAc...) asparagine glycosylation sites follow: Asn-74, Asn-99, and Asn-132. 13 disulfides stabilise this stretch: Cys-147–Cys-175, Cys-179–Cys-202, Cys-189–Cys-208, Cys-212–Cys-221, Cys-216–Cys-227, Cys-228–Cys-236, Cys-232–Cys-245, Cys-248–Cys-257, Cys-261–Cys-273, Cys-279–Cys-299, Cys-303–Cys-317, Cys-320–Cys-324, and Cys-328–Cys-347. An N-linked (GlcNAc...) asparagine glycan is attached at Asn-241. The N-linked (GlcNAc...) asparagine glycan is linked to Asn-310. N-linked (GlcNAc...) asparagine glycosylation is found at Asn-411 and Asn-432. Cys-449 and Cys-482 are oxidised to a cystine. Fibronectin type-III domains lie at 483 to 603 (ESHV…TDAA), 604 to 702 (VPSI…TEAE), 727 to 818 (PRPN…FVFA), and 829 to 924 (IPGI…LKPD). N-linked (GlcNAc...) asparagine glycans are attached at residues Asn-488, Asn-528, Asn-616, Asn-634, and Asn-669. The segment at 670–691 (GTIDTEGGTEPTKPEGSVGEKG) is disordered. Over 735 to 934 (DVLAVGNSTV…VRNNILQMVV (200 aa)) the chain is Extracellular. Residues Asn-741, Asn-750, Asn-758, Asn-895, and Asn-908 are each glycosylated (N-linked (GlcNAc...) asparagine). Residues 935-955 (AIPLALSFLLVGIISIVCFVF) traverse the membrane as a helical segment. Residues 956–1358 (KKRNSNRLGN…ALPLPQSSAC (403 aa)) are Cytoplasmic-facing. A Phosphotyrosine; by autocatalysis modification is found at Tyr-976. The region spanning 995–1270 (ITMNRELGQG…SIKDELDPGF (276 aa)) is the Protein kinase domain. Residues 1001–1009 (LGQGSFGMV) and Lys-1029 each bind ATP. The Proton acceptor role is filled by Asp-1131. Phosphotyrosine; by autocatalysis occurs at positions 1157, 1161, and 1162. Residues 1336–1358 (PYAHMNGGRKNERALPLPQSSAC) form a disordered region.

It belongs to the protein kinase superfamily. Tyr protein kinase family. Insulin receptor subfamily. As to quaternary structure, tetramer of 2 alpha and 2 beta chains linked by disulfide bonds. The alpha chains contribute to the formation of the ligand-binding domain, while the beta chain carries the kinase domain. Mn(2+) is required as a cofactor. Post-translationally, the cytoplasmic domain of the beta subunit is autophosphorylated on Tyr residues in response to low concentrations of insulin-like growth factor (IGF1) and higher concentrations of insulin.

Its subcellular location is the cell membrane. The enzyme catalyses L-tyrosyl-[protein] + ATP = O-phospho-L-tyrosyl-[protein] + ADP + H(+). Autophosphorylation activates the kinase activity. In terms of biological role, this receptor binds insulin-like growth factor 1 (IGF1) with a high affinity and IGF2 with a lower affinity. It has a tyrosine-protein kinase activity, which is necessary for the activation of the IGF1-stimulated downstream signaling cascade. Plays a role in oocyte maturation. Promotes head development by inhibiting Wnt signaling during embryogenesis. The chain is Insulin-like growth factor 1 receptor (igf1r) from Xenopus laevis (African clawed frog).